The sequence spans 450 residues: tRNA modification GTPase MnmE (450 aa).

Arginine 23, glutamate 80, and arginine 123 together coordinate (6S)-5-formyl-5,6,7,8-tetrahydrofolate. Residues 219–372 (GLHVVLAGKP…LRQRLLQLAG (154 aa)) form the TrmE-type G domain. Asparagine 229 provides a ligand contact to K(+). Residues 229–234 (NVGKSS), 248–254 (TPIAGTT), 273–276 (DTAG), and 353–355 (SAR) each bind GTP. Serine 233 is a binding site for Mg(2+). Residues threonine 248, isoleucine 250, and threonine 253 each contribute to the K(+) site. Residue threonine 254 coordinates Mg(2+). Lysine 450 serves as a coordination point for (6S)-5-formyl-5,6,7,8-tetrahydrofolate.

This sequence belongs to the TRAFAC class TrmE-Era-EngA-EngB-Septin-like GTPase superfamily. TrmE GTPase family. As to quaternary structure, homodimer. Heterotetramer of two MnmE and two MnmG subunits. It depends on K(+) as a cofactor.

It is found in the cytoplasm. Exhibits a very high intrinsic GTPase hydrolysis rate. Involved in the addition of a carboxymethylaminomethyl (cmnm) group at the wobble position (U34) of certain tRNAs, forming tRNA-cmnm(5)s(2)U34. This chain is tRNA modification GTPase MnmE, found in Bordetella parapertussis (strain 12822 / ATCC BAA-587 / NCTC 13253).